Here is a 132-residue protein sequence, read N- to C-terminus: Large ribosomal subunit protein uL14 (132 aa).

The protein belongs to the universal ribosomal protein uL14 family. As to quaternary structure, part of the 50S ribosomal subunit. Forms a cluster with proteins L3 and L24e, part of which may contact the 16S rRNA in 2 intersubunit bridges.

Its function is as follows. Binds to 23S rRNA. Forms part of two intersubunit bridges in the 70S ribosome. This chain is Large ribosomal subunit protein uL14, found in Methanococcus vannielii.